A 417-amino-acid chain; its full sequence is Oxidoreductase phnG (417 aa).

Residues 16-20 (GGSYA), arginine 61, and aspartate 317 each bind 6-hydroxy-FAD.

This sequence belongs to the FAD-dependent oxidoreductase family. It depends on 6-hydroxy-FAD as a cofactor.

The enzyme catalyses deoxyherqueinone + NADPH + O2 + H(+) = herqueinone + NADP(+) + H2O. It functions in the pathway secondary metabolite biosynthesis. Functionally, oxidoreductase; part of the gene cluster that mediates the biosynthesis of phenalenones such as herqueinone, compounds that have been reported to treat tumors, bacterial infections and/or mycoses, and rheumatic diseases. The non-reducing polyketide synthase phnA synthesizes the heptaketide backbone and cyclizes it into the angular, hemiketal-containing naphtho-gamma-pyrone prephenalenone. The product template (PT) domain of phnA catalyzes only the C4-C9 aldol condensation, which is unprecedented among known PT domains. The transformation of prephenalenone to phenalenones requires an FAD-dependent monooxygenase phnB, which catalyzes the C2 aromatic hydroxylation of prephenalenone and ring opening of the gamma-pyrone ring simultaneously. Subsequent intramolecular deprotonation of C3 phenolic oxygen accelerates phenalenone ring closure to yield the tricyclic phenalenone core with a C2 hydroxylation. The prenyltransferase phnF further catalyzes reverse C-prenylation of phenalenone by direct electrophilic substitution at C6, or possibly via first a forward O-prenylation of a neighboring phenol in phenalenone, followed by a Claisen rearrangement. The hydroalkoxylation enzyme phnH catalyzes the 5-exo-trig cyclization via acid catalysis after the spontaneous deprotonation of 7-OH, which leads to the formation of the dihydrobenzofuran atrovenetin. Atrovenetin is further converted to deoxyherqueinone by the O-methyltransferase phnC which can methylate C2-OH to stabilize the northern portion of the phenalenone core. Finally, the oxidoreductase phnG converts deoxyherqueinone to herqueinone via C6 hydroxylation. The sequence is that of Oxidoreductase phnG from Penicillium herquei.